The chain runs to 259 residues: Protein IQ-DOMAIN 10 (259 aa).

The tract at residues Lys18–Ser39 is disordered. The region spanning Glu50 to Arg77 is the IQ domain. A calmodulin-binding region spans residues Arg61–Ser71. Residues Lys226–Gly259 form a disordered region.

This sequence belongs to the IQD family. Binds to multiple calmodulin (CaM) in the presence of Ca(2+) and CaM-like proteins.

It localises to the nucleus. Its subcellular location is the cytoplasm. It is found in the cytoskeleton. Its function is as follows. May be involved in cooperative interactions with calmodulins or calmodulin-like proteins. Recruits calmodulin proteins to microtubules, thus being a potential scaffold in cellular signaling and trafficking. May associate with nucleic acids and regulate gene expression at the transcriptional or post-transcriptional level. In Arabidopsis thaliana (Mouse-ear cress), this protein is Protein IQ-DOMAIN 10.